A 168-amino-acid chain; its full sequence is Phosphopantetheine adenylyltransferase (168 aa).

Residue Thr-14 participates in substrate binding. Residues Thr-14–Phe-15 and His-22 each bind ATP. Positions 46, 78, and 92 each coordinate substrate. Residues Gly-93–Arg-95, Glu-103, and Tyr-128–Ser-134 contribute to the ATP site.

It belongs to the bacterial CoaD family. As to quaternary structure, homohexamer. Mg(2+) serves as cofactor.

The protein localises to the cytoplasm. It catalyses the reaction (R)-4'-phosphopantetheine + ATP + H(+) = 3'-dephospho-CoA + diphosphate. It functions in the pathway cofactor biosynthesis; coenzyme A biosynthesis; CoA from (R)-pantothenate: step 4/5. Functionally, reversibly transfers an adenylyl group from ATP to 4'-phosphopantetheine, yielding dephospho-CoA (dPCoA) and pyrophosphate. The polypeptide is Phosphopantetheine adenylyltransferase (Xanthomonas oryzae pv. oryzae (strain MAFF 311018)).